Reading from the N-terminus, the 49-residue chain is Large ribosomal subunit protein bL33 (49 aa).

Belongs to the bacterial ribosomal protein bL33 family.

In Carboxydothermus hydrogenoformans (strain ATCC BAA-161 / DSM 6008 / Z-2901), this protein is Large ribosomal subunit protein bL33.